Consider the following 291-residue polypeptide: Ecto-ADP-ribosyltransferase 5 (291 aa).

Residues 1-22 form the signal peptide; sequence MALAALMIALGSLGLHTWQAQA. The cysteines at positions 42 and 258 are disulfide-linked. The TR mART core domain occupies 62–252; that stretch reads ALLRESWEAA…LVTLWSYNQT (191 aa). Residue Tyr99 participates in NAD(+) binding. N-linked (GlcNAc...) asparagine glycosylation occurs at Asn101. Residues Arg160 and Gln180 each contribute to the NAD(+) site. Residue Arg160 is part of the active site. Residue Ser183 is part of the active site. An N-linked (GlcNAc...) asparagine glycan is attached at Asn196. Ser214 is an NAD(+) binding site. The active site involves Glu221. N-linked (GlcNAc...) asparagine glycosylation is present at Asn250.

Belongs to the Arg-specific ADP-ribosyltransferase family.

The protein localises to the secreted. It catalyses the reaction L-arginyl-[protein] + NAD(+) = N(omega)-(ADP-D-ribosyl)-L-arginyl-[protein] + nicotinamide + H(+). The protein is Ecto-ADP-ribosyltransferase 5 (ART5) of Homo sapiens (Human).